Here is a 181-residue protein sequence, read N- to C-terminus: Peptidyl-tRNA hydrolase (181 aa).

Position 14 (Tyr14) interacts with tRNA. The Proton acceptor role is filled by His19. 3 residues coordinate tRNA: Tyr62, Asn64, and Asn108.

It belongs to the PTH family. Monomer.

The protein resides in the cytoplasm. It carries out the reaction an N-acyl-L-alpha-aminoacyl-tRNA + H2O = an N-acyl-L-amino acid + a tRNA + H(+). Its function is as follows. Hydrolyzes ribosome-free peptidyl-tRNAs (with 1 or more amino acids incorporated), which drop off the ribosome during protein synthesis, or as a result of ribosome stalling. Functionally, catalyzes the release of premature peptidyl moieties from peptidyl-tRNA molecules trapped in stalled 50S ribosomal subunits, and thus maintains levels of free tRNAs and 50S ribosomes. The sequence is that of Peptidyl-tRNA hydrolase from Campylobacter jejuni (strain RM1221).